The primary structure comprises 237 residues: Demethylmenaquinone methyltransferase (237 aa).

Residues T58, D79, and 106–107 (NA) contribute to the S-adenosyl-L-methionine site.

The protein belongs to the class I-like SAM-binding methyltransferase superfamily. MenG/UbiE family.

It catalyses the reaction a 2-demethylmenaquinol + S-adenosyl-L-methionine = a menaquinol + S-adenosyl-L-homocysteine + H(+). It functions in the pathway quinol/quinone metabolism; menaquinone biosynthesis; menaquinol from 1,4-dihydroxy-2-naphthoate: step 2/2. In terms of biological role, methyltransferase required for the conversion of demethylmenaquinol (DMKH2) to menaquinol (MKH2). The polypeptide is Demethylmenaquinone methyltransferase (Bacillus mycoides (strain KBAB4) (Bacillus weihenstephanensis)).